Here is a 386-residue protein sequence, read N- to C-terminus: Tumor necrosis factor receptor superfamily member 10D (386 aa).

2 disordered regions span residues methionine 1–alanine 25 and aspartate 62–serine 90. The first 55 residues, methionine 1 to serine 55, serve as a signal peptide directing secretion. The Extracellular segment spans residues alanine 56–histidine 211. TNFR-Cys repeat units lie at residues isoleucine 58 to asparagine 97, proline 98 to cysteine 139, and glutamine 140 to cysteine 180. The span at valine 64–arginine 75 shows a compositional bias: polar residues. 7 disulfide bridges follow: cysteine 83-cysteine 96, cysteine 99-cysteine 115, cysteine 118-cysteine 131, cysteine 121-cysteine 139, cysteine 141-cysteine 155, cysteine 158-cysteine 172, and cysteine 162-cysteine 180. N-linked (GlcNAc...) asparagine glycosylation occurs at asparagine 127. An N-linked (GlcNAc...) asparagine glycan is attached at asparagine 182. Residues tyrosine 212–cysteine 232 traverse the membrane as a helical segment. Topologically, residues arginine 233 to leucine 386 are cytoplasmic. The 27-residue stretch at serine 340–leucine 366 folds into the Death; truncated domain.

As to expression, widely expressed, in particular in fetal kidney, lung and liver, and in adult testis and liver. Also expressed in peripheral blood leukocytes, colon and small intestine, ovary, prostate, thymus, spleen, pancreas, kidney, lung, placenta and heart.

Its subcellular location is the membrane. Its function is as follows. Receptor for the cytotoxic ligand TRAIL. Contains a truncated death domain and hence is not capable of inducing apoptosis but protects against TRAIL-mediated apoptosis. Reports are contradictory with regards to its ability to induce the NF-kappa-B pathway. According to PubMed:9382840, it cannot but according to PubMed:9430226, it can induce the NF-kappa-B pathway. This is Tumor necrosis factor receptor superfamily member 10D from Homo sapiens (Human).